The sequence spans 366 residues: tRNA/tmRNA (uracil-C(5))-methyltransferase (366 aa).

S-adenosyl-L-methionine is bound by residues Q189, Y217, N222, E238, and D298. Residue C323 is the Nucleophile of the active site. The active-site Proton acceptor is the E357.

Belongs to the class I-like SAM-binding methyltransferase superfamily. RNA M5U methyltransferase family. TrmA subfamily.

It carries out the reaction uridine(54) in tRNA + S-adenosyl-L-methionine = 5-methyluridine(54) in tRNA + S-adenosyl-L-homocysteine + H(+). The enzyme catalyses uridine(341) in tmRNA + S-adenosyl-L-methionine = 5-methyluridine(341) in tmRNA + S-adenosyl-L-homocysteine + H(+). In terms of biological role, dual-specificity methyltransferase that catalyzes the formation of 5-methyluridine at position 54 (m5U54) in all tRNAs, and that of position 341 (m5U341) in tmRNA (transfer-mRNA). This is tRNA/tmRNA (uracil-C(5))-methyltransferase from Photorhabdus laumondii subsp. laumondii (strain DSM 15139 / CIP 105565 / TT01) (Photorhabdus luminescens subsp. laumondii).